A 1173-amino-acid chain; its full sequence is Protein GIGANTEA (1173 aa).

Disordered regions lie at residues 150 to 187, 604 to 641, and 840 to 863; these read EQQN…RKPL, SGSK…NVKG, and SRTE…SGRP. Polar residues-rich tracts occupy residues 162-172 and 613-633; these read SKATTSGSPTS and YAST…QTAN. The span at 854-863 shows a compositional bias: basic and acidic residues; the sequence is RHSDEGSGRP.

This sequence belongs to the GIGANTEA family. In terms of assembly, interacts with SPY. Interacts with ADO1 (via N-terminus) and ADO2. Interacts with ADO3 (via N-terminus). Interacts (via N-terminus) with CDF1. Interacts (via N-terminus) with TCP4. Widely expressed with highest levels in inflorescence apices, young flowers and young siliques.

It localises to the nucleus. The protein resides in the cytoplasm. Its function is as follows. Involved in regulation of circadian rhythm and photoperiodic flowering. May play a role in maintenance of circadian amplitude and period length. Is involved in phytochrome B signaling. Stabilizes ADO3 and the circadian photoreceptor ADO1/ZTL. Regulates 'CONSTANS' (CO) in the long-day flowering pathway by modulating the ADO3-dependent protein stability of CDF1 and CDF2, but is not essential to activate CO transcription. Regulates, via the microRNA miR172, a CO-independent pathway that promotes photoperiodic flowering by inducing 'FLOWERING LOCUS T'. The sequence is that of Protein GIGANTEA (GI) from Arabidopsis thaliana (Mouse-ear cress).